The primary structure comprises 67 residues: uncharacterized protein (67 aa).

This is an uncharacterized protein from Measles virus (strain Halle) (MeV).